Consider the following 317-residue polypeptide: Insulin-like growth factor-binding protein 2 (317 aa).

The N-terminal stretch at 1–33 (MQPRLGGPALLLLPPLLLLLLLGAGGGDCGARA) is a signal peptide. The 92-residue stretch at 35–126 (VLFRCPPCTP…VHGEGTCEKH (92 aa)) folds into the IGFBP N-terminal domain. 6 disulfides stabilise this stretch: Cys39–Cys76, Cys42–Cys78, Cys50–Cys79, Cys68–Cys82, Cys90–Cys103, and Cys97–Cys123. Disordered regions lie at residues 126-146 (HGDAEYSASPEQVADNGEEHS) and 190-218 (QHRQMGKGGKHHLGLEEPKKLRPPPARTP). The region spanning 216–298 (RTPCQQELDQ…APTIRGDPEC (83 aa)) is the Thyroglobulin type-1 domain. Cystine bridges form between Cys219–Cys253, Cys264–Cys275, and Cys277–Cys298. The Cell attachment site motif lies at 293 to 295 (RGD).

In terms of assembly, interacts with IGF1. Interacts with IGF2. Interacts (via RGD motif) with integrin alpha5/ITGA5; this interaction induces cell migration, adhesion or apoptosis according to the context. Interacts with PTPRB; this interaction leads to PTPRB dimerization and inactivation. Cleaved by MMP9 leading to release of free IGF2 from IGFBP2-IGF2 complex, which contributes to enhance the motility and the growth of astrocytes. Post-translationally, O-glycosylated.

The protein localises to the secreted. Functionally, multifunctional protein that plays a critical role in regulating the availability of IGFs such as IGF1 and IGF2 to their receptors and thereby regulates IGF-mediated cellular processes including proliferation, differentiation, and apoptosis in a cell-type specific manner. Functions coordinately with receptor protein tyrosine phosphatase beta/PTPRB and the IGF1 receptor to regulate IGF1-mediated signaling by stimulating the phosphorylation of PTEN leading to its inactivation and AKT1 activation. Plays a positive role in cell migration via interaction with integrin alpha5/ITGA5 through an RGD motif. Additionally, interaction with ITGA5/ITGB1 enhances the adhesion of endothelial progenitor cells to endothelial cells. Upon mitochondrial damage, facilitates apoptosis with ITGA5 of podocytes, and then activates the phosphorylation of focal adhesion kinase (FAK)-mediated mitochondrial injury. The chain is Insulin-like growth factor-binding protein 2 (IGFBP2) from Bos taurus (Bovine).